The primary structure comprises 334 residues: Leukocyte cell-derived chemotaxin 1 (334 aa).

A helical transmembrane segment spans residues 46–66; sequence VVLISGAVLLLFGAIGAFYFW. The BRICHOS domain maps to 105–201; the sequence is GSGAEEAIEV…FCGDLPIFWL (97 aa). A disulfide bridge links Cys-132 with Cys-193. Residues 211-214 constitute a propeptide that is removed on maturation; it reads RERR. The segment at 212–268 is disordered; the sequence is ERREVVRSSAPSTTRRPHSEPRGNAGPGRLSNRTRPSVQDDEEPFNPDNPYHQQEGE. Asn-243 carries N-linked (GlcNAc...) asparagine glycosylation. Cystine bridges form between Cys-282–Cys-286, Cys-283–Cys-323, Cys-293–Cys-317, and Cys-297–Cys-313.

Belongs to the chondromodulin-1 family. After cleavage, the post-translationally modified ChM-I is secreted as a glycoprotein. In terms of tissue distribution, detected in cartilage, cardiac valves and valvular interstitial cells (at protein level). Expressed in eye.

The protein localises to the secreted. The protein resides in the extracellular space. It localises to the extracellular matrix. It is found in the endomembrane system. Bifunctional growth regulator that stimulates the growth of cultured chondrocytes in the presence of basic fibroblast growth factor (FGF) but inhibits the growth of cultured vascular endothelial cells. May contribute to the rapid growth of cartilage and vascular invasion prior to the replacement of cartilage by bone during endochondral bone development. Inhibits in vitro tube formation and mobilization of endothelial cells. Plays a role as antiangiogenic factor in cardiac valves to suppress neovascularization. The chain is Leukocyte cell-derived chemotaxin 1 from Rattus norvegicus (Rat).